The chain runs to 392 residues: Formate-dependent phosphoribosylglycinamide formyltransferase (392 aa).

N(1)-(5-phospho-beta-D-ribosyl)glycinamide-binding positions include Glu22–Leu23 and Glu82. ATP is bound by residues Arg114, Lys155, Ser160–Gln165, Glu195–Val198, and Glu203. Positions Arg119–Leu308 constitute an ATP-grasp domain. Glu267 and Glu279 together coordinate Mg(2+). Residues Asp286, Lys355, and Arg362–Arg363 each bind N(1)-(5-phospho-beta-D-ribosyl)glycinamide.

It belongs to the PurK/PurT family. In terms of assembly, homodimer.

The catalysed reaction is N(1)-(5-phospho-beta-D-ribosyl)glycinamide + formate + ATP = N(2)-formyl-N(1)-(5-phospho-beta-D-ribosyl)glycinamide + ADP + phosphate + H(+). It functions in the pathway purine metabolism; IMP biosynthesis via de novo pathway; N(2)-formyl-N(1)-(5-phospho-D-ribosyl)glycinamide from N(1)-(5-phospho-D-ribosyl)glycinamide (formate route): step 1/1. Involved in the de novo purine biosynthesis. Catalyzes the transfer of formate to 5-phospho-ribosyl-glycinamide (GAR), producing 5-phospho-ribosyl-N-formylglycinamide (FGAR). Formate is provided by PurU via hydrolysis of 10-formyl-tetrahydrofolate. The polypeptide is Formate-dependent phosphoribosylglycinamide formyltransferase (Salmonella paratyphi A (strain ATCC 9150 / SARB42)).